The sequence spans 484 residues: tRNA sulfurtransferase (484 aa).

Residues 63–167 form the THUMP domain; it reads QAFGERLACI…RDKLYMVTKR (105 aa). Residues 185-186, Lys-267, Gly-289, and Gln-298 each bind ATP; that span reads LI. Cysteines 346 and 458 form a disulfide. The 79-residue stretch at 406–484 folds into the Rhodanese domain; that stretch reads IETNEVVIDI…GYTNVKVYRP (79 aa). The Cysteine persulfide intermediate role is filled by Cys-458.

The protein belongs to the ThiI family.

The protein localises to the cytoplasm. It catalyses the reaction [ThiI sulfur-carrier protein]-S-sulfanyl-L-cysteine + a uridine in tRNA + 2 reduced [2Fe-2S]-[ferredoxin] + ATP + H(+) = [ThiI sulfur-carrier protein]-L-cysteine + a 4-thiouridine in tRNA + 2 oxidized [2Fe-2S]-[ferredoxin] + AMP + diphosphate. The catalysed reaction is [ThiS sulfur-carrier protein]-C-terminal Gly-Gly-AMP + S-sulfanyl-L-cysteinyl-[cysteine desulfurase] + AH2 = [ThiS sulfur-carrier protein]-C-terminal-Gly-aminoethanethioate + L-cysteinyl-[cysteine desulfurase] + A + AMP + 2 H(+). The protein operates within cofactor biosynthesis; thiamine diphosphate biosynthesis. Catalyzes the ATP-dependent transfer of a sulfur to tRNA to produce 4-thiouridine in position 8 of tRNAs, which functions as a near-UV photosensor. Also catalyzes the transfer of sulfur to the sulfur carrier protein ThiS, forming ThiS-thiocarboxylate. This is a step in the synthesis of thiazole, in the thiamine biosynthesis pathway. The sulfur is donated as persulfide by IscS. This chain is tRNA sulfurtransferase, found in Shewanella putrefaciens (strain CN-32 / ATCC BAA-453).